The following is an 878-amino-acid chain: Staphylococcal nuclease domain-containing protein 1 (878 aa).

TNase-like domains follow at residues 3 to 142 (QYVS…IWGP) and 167 to 312 (KKLN…IWKN). S316 bears the Phosphoserine mark. 2 consecutive TNase-like domains span residues 326–464 (KDYS…MWSG) and 493–626 (RKLS…MWHD). The 61-residue stretch at 695-755 (KINVGMNVAA…SSLPDTYTKL (61 aa)) folds into the Tudor domain.

The protein resides in the cytoplasm. It is found in the cytosol. This is Staphylococcal nuclease domain-containing protein 1 from Schizosaccharomyces pombe (strain 972 / ATCC 24843) (Fission yeast).